The chain runs to 285 residues: Polyamine aminopropyltransferase (285 aa).

One can recognise a PABS domain in the interval aspartate 5–lysine 241. Glutamine 35 contacts S-methyl-5'-thioadenosine. Histidine 66 and aspartate 90 together coordinate spermidine. S-methyl-5'-thioadenosine is bound by residues aspartate 110 and aspartate 141–glycine 142. Aspartate 160 serves as the catalytic Proton acceptor. Aspartate 160–aspartate 163 is a binding site for spermidine. Position 167 (proline 167) interacts with S-methyl-5'-thioadenosine.

Belongs to the spermidine/spermine synthase family. In terms of assembly, homodimer or homotetramer.

Its subcellular location is the cytoplasm. The enzyme catalyses S-adenosyl 3-(methylsulfanyl)propylamine + putrescine = S-methyl-5'-thioadenosine + spermidine + H(+). It functions in the pathway amine and polyamine biosynthesis; spermidine biosynthesis; spermidine from putrescine: step 1/1. Functionally, catalyzes the irreversible transfer of a propylamine group from the amino donor S-adenosylmethioninamine (decarboxy-AdoMet) to putrescine (1,4-diaminobutane) to yield spermidine. The polypeptide is Polyamine aminopropyltransferase (Xylella fastidiosa (strain Temecula1 / ATCC 700964)).